The sequence spans 391 residues: Alanine racemase (391 aa).

K46 serves as the catalytic Proton acceptor; specific for D-alanine. Residue K46 is modified to N6-(pyridoxal phosphate)lysine. R148 provides a ligand contact to substrate. Y283 functions as the Proton acceptor; specific for L-alanine in the catalytic mechanism. Position 331 (M331) interacts with substrate.

This sequence belongs to the alanine racemase family. Pyridoxal 5'-phosphate serves as cofactor.

The catalysed reaction is L-alanine = D-alanine. The protein operates within amino-acid biosynthesis; D-alanine biosynthesis; D-alanine from L-alanine: step 1/1. Its function is as follows. Catalyzes the interconversion of L-alanine and D-alanine. May also act on other amino acids. This is Alanine racemase (alr) from Streptomyces coelicolor (strain ATCC BAA-471 / A3(2) / M145).